The sequence spans 467 residues: UDP-N-acetylmuramate--L-alanine ligase (467 aa).

121 to 127 (GSHGKTT) serves as a coordination point for ATP.

This sequence belongs to the MurCDEF family.

It localises to the cytoplasm. It carries out the reaction UDP-N-acetyl-alpha-D-muramate + L-alanine + ATP = UDP-N-acetyl-alpha-D-muramoyl-L-alanine + ADP + phosphate + H(+). It functions in the pathway cell wall biogenesis; peptidoglycan biosynthesis. Its function is as follows. Cell wall formation. This chain is UDP-N-acetylmuramate--L-alanine ligase, found in Parasynechococcus marenigrum (strain WH8102).